A 369-amino-acid chain; its full sequence is Tyrosine-protein phosphatase non-receptor type 5 (369 aa).

Position 49 is a phosphoserine; by PKA (S49). T59 carries the post-translational modification Phosphothreonine; by MAPK. S72 carries the post-translational modification Phosphoserine; by MAPK. The Tyrosine-protein phosphatase domain maps to 104–359; sequence LQAEFFEIPM…QFVHHAMSLY (256 aa). Substrate-binding positions include D265, 300–306, and Q344; that span reads CSAGIGR. The active-site Phosphocysteine intermediate is the C300.

The protein belongs to the protein-tyrosine phosphatase family. Non-receptor class subfamily. Post-translationally, phosphorylation at Ser-49 by PKA deactivates PTPN5. Phosphorylation at Thr-59 and Ser-72 by MAPKs stabilizes the phosphatase, dephosphorylation of these sites results in ubiquitin-mediated degradation of the active phosphatase. Expressed in the central nervous system except in the cerebellum. Enriched within the striatum relative to other brain areas.

The protein localises to the cytoplasm. The enzyme catalyses O-phospho-L-tyrosyl-[protein] + H2O = L-tyrosyl-[protein] + phosphate. Its function is as follows. May regulate the activity of several effector molecules involved in synaptic plasticity and neuronal cell survival, including MAPKs, Src family kinases and NMDA receptors. The protein is Tyrosine-protein phosphatase non-receptor type 5 (Ptpn5) of Rattus norvegicus (Rat).